Reading from the N-terminus, the 466-residue chain is Glutamate--tRNA ligase 1 (466 aa).

The 'HIGH' region signature appears at 10 to 20 (PSPTGLIHLGN). Residues Cys-103, Cys-105, Cys-130, and His-132 each contribute to the Zn(2+) site. Positions 247–251 (PLSKR) match the 'KMSKS' region motif. Lys-250 lines the ATP pocket.

Belongs to the class-I aminoacyl-tRNA synthetase family. Glutamate--tRNA ligase type 1 subfamily. In terms of assembly, monomer. Requires Zn(2+) as cofactor.

It is found in the cytoplasm. It catalyses the reaction tRNA(Glu) + L-glutamate + ATP = L-glutamyl-tRNA(Glu) + AMP + diphosphate. Functionally, catalyzes the attachment of glutamate to tRNA(Glu) in a two-step reaction: glutamate is first activated by ATP to form Glu-AMP and then transferred to the acceptor end of tRNA(Glu). In Methylococcus capsulatus (strain ATCC 33009 / NCIMB 11132 / Bath), this protein is Glutamate--tRNA ligase 1.